The chain runs to 61 residues: Protein translocase subunit SecE (61 aa).

A helical membrane pass occupies residues 38–58 (GIGMILIGTIGMIIRIIGYLV).

The protein belongs to the SecE/SEC61-gamma family. Component of the Sec protein translocase complex. Heterotrimer consisting of SecY (alpha), SecG (beta) and SecE (gamma) subunits. The heterotrimers can form oligomers, although 1 heterotrimer is thought to be able to translocate proteins. Interacts with the ribosome. May interact with SecDF, and other proteins may be involved.

It is found in the cell membrane. Functionally, essential subunit of the Sec protein translocation channel SecYEG. Clamps together the 2 halves of SecY. May contact the channel plug during translocation. This Thermococcus kodakarensis (strain ATCC BAA-918 / JCM 12380 / KOD1) (Pyrococcus kodakaraensis (strain KOD1)) protein is Protein translocase subunit SecE.